We begin with the raw amino-acid sequence, 518 residues long: Chromosomal replication initiator protein DnaA (518 aa).

The domain I, interacts with DnaA modulators stretch occupies residues 1–72; that stretch reads MTLAEFWPLC…VREELAAGRS (72 aa). Residues 72-180 form a domain II region; that stretch reads SAFVFKPGEG…DAEEARYEQT (109 aa). The segment at 181–397 is domain III, AAA+ region; sequence NLSPDYTFDT…GAFNRVGASS (217 aa). ATP-binding residues include Gly225, Gly227, Lys228, and Thr229. Residues 398–518 form a domain IV, binds dsDNA region; sequence RFMNRPVIDI…YEKLLILIQN (121 aa).

Belongs to the DnaA family. Oligomerizes as a right-handed, spiral filament on DNA at oriC.

The protein resides in the cytoplasm. In terms of biological role, plays an essential role in the initiation and regulation of chromosomal replication. ATP-DnaA binds to the origin of replication (oriC) to initiate formation of the DNA replication initiation complex once per cell cycle. Binds the DnaA box (a 9 base pair repeat at the origin) and separates the double-stranded (ds)DNA. Forms a right-handed helical filament on oriC DNA; dsDNA binds to the exterior of the filament while single-stranded (ss)DNA is stabiized in the filament's interior. The ATP-DnaA-oriC complex binds and stabilizes one strand of the AT-rich DNA unwinding element (DUE), permitting loading of DNA polymerase. After initiation quickly degrades to an ADP-DnaA complex that is not apt for DNA replication. Binds acidic phospholipids. The protein is Chromosomal replication initiator protein DnaA of Neisseria meningitidis serogroup C / serotype 2a (strain ATCC 700532 / DSM 15464 / FAM18).